The sequence spans 244 residues: MGRGPSIEARKNASDSKRGKIFTKIIRQIGVAARAGGGDPYNNPSLRVVIDKALASNMSKDVIERAIKKAIGEMEGVQYEEVRYEGYAPGGVAVIVDCLTDNRLRTVSDVRHAFSKCGGNMGAEGSVAFMFKRLGVLSYAHAIADEELITEAAIDAGAEDVMVYTQDDEIEVITTPEAFSRVKEEMAALGLMPYHAEITFRADSDIVVDGDTAIQVRKLLDILEDLDDVQDVYSNVDQVTLGKR.

The protein belongs to the TACO1 family.

It is found in the cytoplasm. The polypeptide is Probable transcriptional regulatory protein Xfasm12_1059 (Xylella fastidiosa (strain M12)).